Here is a 473-residue protein sequence, read N- to C-terminus: Mitochondrial adenyl nucleotide antiporter SLC25A24-B (473 aa).

The regulatory N-terminal domain stretch occupies residues Met-1 to Asp-173. Residues Met-1 to Gln-197 are Mitochondrial intermembrane-facing. 4 EF-hand domains span residues Asp-19 to Glu-54, Val-55 to Glu-88, Glu-86 to Lys-121, and Ile-122 to Asp-157. Residues Asp-32, Asn-34, Asp-36, Lys-38, Glu-43, Asp-68, Asn-70, Asp-72, His-74, Glu-79, Asp-99, Asn-101, Asp-103, Lys-105, Glu-110, Asp-135, Asp-137, Thr-139, Thr-141, and Glu-146 each coordinate Ca(2+). Residues Ile-159–His-168 are linker region. Positions Ile-174–Ile-473 are C-terminal transmembrane transporter domain. Solcar repeat units lie at residues Gly-192–Leu-277, Leu-285–Tyr-370, and Pro-382–Gln-470. The chain crosses the membrane as a helical span at residues Leu-198 to Leu-215. Residues Asp-216–Arg-251 are Mitochondrial matrix-facing. The helical transmembrane segment at Gly-252 to Tyr-271 threads the bilayer. The Mitochondrial intermembrane portion of the chain corresponds to Glu-272–Gly-294. Residues Ser-295–Met-308 traverse the membrane as a helical segment. Residues Glu-309–Lys-344 are Mitochondrial matrix-facing. The helical transmembrane segment at Gly-345–Tyr-364 threads the bilayer. The Mitochondrial intermembrane segment spans residues Glu-365–Leu-387. A helical membrane pass occupies residues Leu-388–Leu-405. Over Ala-406 to Arg-444 the chain is Mitochondrial matrix. A helical transmembrane segment spans residues Gly-445–Tyr-464. The Mitochondrial intermembrane portion of the chain corresponds to Glu-465–Ile-473.

Belongs to the mitochondrial carrier (TC 2.A.29) family. In terms of assembly, monomer.

Its subcellular location is the mitochondrion inner membrane. It catalyses the reaction Mg(2+)(out) + phosphate(in) + ATP(out) = Mg(2+)(in) + phosphate(out) + ATP(in). The enzyme catalyses ADP(out) + phosphate(in) + H(+)(out) = ADP(in) + phosphate(out) + H(+)(in). The catalysed reaction is AMP(out) + phosphate(in) = AMP(in) + phosphate(out). It carries out the reaction phosphate(in) + ATP(out) + 2 H(+)(out) = phosphate(out) + ATP(in) + 2 H(+)(in). It catalyses the reaction dADP(in) + ADP(out) = dADP(out) + ADP(in). The enzyme catalyses Mg(2+)(in) + ADP(out) + ATP(in) + H(+)(out) = Mg(2+)(out) + ADP(in) + ATP(out) + H(+)(in). The catalysed reaction is ADP(out) + diphosphate(in) = ADP(in) + diphosphate(out). It carries out the reaction dAMP(in) + ADP(out) + H(+)(out) = dAMP(out) + ADP(in) + H(+)(in). It catalyses the reaction 3'-AMP(in) + ADP(out) + H(+)(out) = 3'-AMP(out) + ADP(in) + H(+)(in). The enzyme catalyses dAMP(out) + phosphate(in) = dAMP(in) + phosphate(out). The catalysed reaction is 3'-AMP(out) + phosphate(in) = 3'-AMP(in) + phosphate(out). It carries out the reaction dADP(out) + phosphate(in) + H(+)(out) = dADP(in) + phosphate(out) + H(+)(in). Activated by an increase in cytosolic calcium levels that induce a conformational change of the N-terminal regulatory domain, uncapping the channel and allowing transport. Inhibited by bathophenanthroline, mersalyl, p-hydroxymercuribenzoate, bromcresol purple and tannic acid. Electroneutral antiporter that mediates the transport of adenyl nucleotides through the inner mitochondrial membrane. Originally identified as an ATP-magnesium/inorganic phosphate antiporter, it also acts as a broad specificity adenyl nucleotide antiporter. By regulating the mitochondrial matrix adenyl nucleotide pool could adapt to changing cellular energetic demands and indirectly regulate adenyl nucleotide-dependent metabolic pathways. The chain is Mitochondrial adenyl nucleotide antiporter SLC25A24-B (slc25a24-b) from Xenopus laevis (African clawed frog).